The sequence spans 227 residues: Large ribosomal subunit protein uL3 (227 aa).

Q151 carries the N5-methylglutamine modification.

This sequence belongs to the universal ribosomal protein uL3 family. Part of the 50S ribosomal subunit. Forms a cluster with proteins L14 and L19. Methylated by PrmB.

In terms of biological role, one of the primary rRNA binding proteins, it binds directly near the 3'-end of the 23S rRNA, where it nucleates assembly of the 50S subunit. The chain is Large ribosomal subunit protein uL3 from Gluconobacter oxydans (strain 621H) (Gluconobacter suboxydans).